We begin with the raw amino-acid sequence, 299 residues long: Urease accessory protein UreD (299 aa).

The protein belongs to the UreD family. As to quaternary structure, ureD, UreF and UreG form a complex that acts as a GTP-hydrolysis-dependent molecular chaperone, activating the urease apoprotein by helping to assemble the nickel containing metallocenter of UreC. The UreE protein probably delivers the nickel.

Its subcellular location is the cytoplasm. Its function is as follows. Required for maturation of urease via the functional incorporation of the urease nickel metallocenter. The chain is Urease accessory protein UreD from Haloarcula marismortui (strain ATCC 43049 / DSM 3752 / JCM 8966 / VKM B-1809) (Halobacterium marismortui).